The following is a 551-amino-acid chain: L-lactate permease (551 aa).

12 helical membrane passes run 13–33 (NIWLSSLIASLPILFFFFALI), 37–57 (LKGYVAASWTVVIALAVALLF), 69–89 (VVYGFFYGLWPIAWIIIAAVF), 131–151 (GAAGFGAPVAITAALLVGLGF), 159–179 (LCLIVNTAPVAFGAMGIPILV), 194–214 (MVGRQLPFLTIIVLFWIMAIM), 244–264 (FIGPELPDIISSLVSLVCLTL), 306–326 (FLFLTATVTLWSVPPFKALFA), 366–386 (FDWFSATGTAILFAALLSIVW), 405–425 (LALPIYSIGMVLAFAFISNYS), 438–458 (TGSAFTFFSPFLGWLGVFLTG), and 530–550 (IFTCMVGVITTLQAYVLTWMI).

This sequence belongs to the lactate permease family.

The protein resides in the cell inner membrane. The catalysed reaction is (S)-lactate(in) + H(+)(in) = (S)-lactate(out) + H(+)(out). It carries out the reaction (R)-lactate(in) + H(+)(in) = (R)-lactate(out) + H(+)(out). The enzyme catalyses glycolate(in) + H(+)(in) = glycolate(out) + H(+)(out). Its function is as follows. Uptake of L-lactate across the membrane. Can also transport D-lactate and glycolate. Seems to be driven by a proton motive force. This Salmonella typhimurium (strain LT2 / SGSC1412 / ATCC 700720) protein is L-lactate permease (lldP).